Reading from the N-terminus, the 831-residue chain is Translation initiation factor IF-2 (831 aa).

Positions 329-499 (TRAPVVTVMG…LLIAEMQDLK (171 aa)) constitute a tr-type G domain. A G1 region spans residues 338–345 (GHVDHGKT). Residue 338–345 (GHVDHGKT) participates in GTP binding. The G2 stretch occupies residues 363–367 (GITQH). The G3 stretch occupies residues 385–388 (DTPG). GTP is bound by residues 385–389 (DTPGH) and 439–442 (NKID). The interval 439-442 (NKID) is G4. Positions 475-477 (SAL) are G5.

This sequence belongs to the TRAFAC class translation factor GTPase superfamily. Classic translation factor GTPase family. IF-2 subfamily.

It is found in the cytoplasm. Its function is as follows. One of the essential components for the initiation of protein synthesis. Protects formylmethionyl-tRNA from spontaneous hydrolysis and promotes its binding to the 30S ribosomal subunits. Also involved in the hydrolysis of GTP during the formation of the 70S ribosomal complex. This chain is Translation initiation factor IF-2, found in Rickettsia massiliae (strain Mtu5).